Consider the following 340-residue polypeptide: S-adenosylmethionine:tRNA ribosyltransferase-isomerase (340 aa).

It belongs to the QueA family. As to quaternary structure, monomer.

Its subcellular location is the cytoplasm. It carries out the reaction 7-aminomethyl-7-carbaguanosine(34) in tRNA + S-adenosyl-L-methionine = epoxyqueuosine(34) in tRNA + adenine + L-methionine + 2 H(+). It functions in the pathway tRNA modification; tRNA-queuosine biosynthesis. In terms of biological role, transfers and isomerizes the ribose moiety from AdoMet to the 7-aminomethyl group of 7-deazaguanine (preQ1-tRNA) to give epoxyqueuosine (oQ-tRNA). The protein is S-adenosylmethionine:tRNA ribosyltransferase-isomerase of Francisella tularensis subsp. holarctica (strain OSU18).